A 414-amino-acid chain; its full sequence is Enolase (414 aa).

Position 162 (glutamine 162) interacts with (2R)-2-phosphoglycerate. Catalysis depends on glutamate 204, which acts as the Proton donor. Mg(2+) contacts are provided by aspartate 239, glutamate 280, and aspartate 307. Residues lysine 332, arginine 361, serine 362, and lysine 383 each contribute to the (2R)-2-phosphoglycerate site. Lysine 332 serves as the catalytic Proton acceptor.

It belongs to the enolase family. Mg(2+) serves as cofactor.

It localises to the cytoplasm. The protein localises to the secreted. The protein resides in the cell surface. The enzyme catalyses (2R)-2-phosphoglycerate = phosphoenolpyruvate + H2O. It participates in carbohydrate degradation; glycolysis; pyruvate from D-glyceraldehyde 3-phosphate: step 4/5. Catalyzes the reversible conversion of 2-phosphoglycerate (2-PG) into phosphoenolpyruvate (PEP). It is essential for the degradation of carbohydrates via glycolysis. In Campylobacter jejuni subsp. doylei (strain ATCC BAA-1458 / RM4099 / 269.97), this protein is Enolase.